A 444-amino-acid polypeptide reads, in one-letter code: E3 ubiquitin-protein ligase APD2 (444 aa).

Residues M1–P15 show a composition bias toward low complexity. The tract at residues M1 to P41 is disordered. The segment covering T17 to P41 has biased composition (basic and acidic residues). Helical transmembrane passes span V74 to G94 and I312 to F332. The segment at C393–R432 adopts an RING-type zinc-finger fold.

Interacts with At1g78040, At1g10650, VHA-c4/AVAP4, VHA-c''2/VMA16 and TUFA. Expressed in the shoot apical meristems (SAM), root tips, pollen and inflorescences.

It localises to the endomembrane system. The catalysed reaction is S-ubiquitinyl-[E2 ubiquitin-conjugating enzyme]-L-cysteine + [acceptor protein]-L-lysine = [E2 ubiquitin-conjugating enzyme]-L-cysteine + N(6)-ubiquitinyl-[acceptor protein]-L-lysine.. It participates in protein modification; protein ubiquitination. Functionally, exhibits E2-dependent E3 ligase activity. Involved in pollen mitosis II (PMII) regulation during male gametogenesis. In Arabidopsis thaliana (Mouse-ear cress), this protein is E3 ubiquitin-protein ligase APD2.